A 359-amino-acid polypeptide reads, in one-letter code: 3-dehydroquinate synthase (359 aa).

Residues 72–77 (EGEIHK), 106–110 (GVIGD), 130–131 (TS), lysine 143, lysine 152, and 170–173 (CLKT) contribute to the NAD(+) site. Positions 185, 248, and 264 each coordinate Zn(2+).

It belongs to the sugar phosphate cyclases superfamily. Dehydroquinate synthase family. Requires Co(2+) as cofactor. Zn(2+) serves as cofactor. The cofactor is NAD(+).

It localises to the cytoplasm. It catalyses the reaction 7-phospho-2-dehydro-3-deoxy-D-arabino-heptonate = 3-dehydroquinate + phosphate. It participates in metabolic intermediate biosynthesis; chorismate biosynthesis; chorismate from D-erythrose 4-phosphate and phosphoenolpyruvate: step 2/7. In terms of biological role, catalyzes the conversion of 3-deoxy-D-arabino-heptulosonate 7-phosphate (DAHP) to dehydroquinate (DHQ). The chain is 3-dehydroquinate synthase from Dehalococcoides mccartyi (strain CBDB1).